A 266-amino-acid chain; its full sequence is F-actin-capping protein subunit beta (266 aa).

Belongs to the F-actin-capping protein beta subunit family. Component of the F-actin capping complex, composed of a heterodimer of an alpha and a beta subunit.

Its subcellular location is the cytoplasm. The protein localises to the cytoskeleton. The protein resides in the actin patch. In terms of biological role, F-actin-capping proteins bind in a Ca(2+)-independent manner to the fast growing ends of actin filaments (barbed end) thereby blocking the exchange of subunits at these ends. Unlike other capping proteins (such as gelsolin and severin), these proteins do not sever actin filaments. This chain is F-actin-capping protein subunit beta (cap2), found in Aspergillus oryzae (strain ATCC 42149 / RIB 40) (Yellow koji mold).